Here is a 410-residue protein sequence, read N- to C-terminus: Divergent protein kinase domain 1C (410 aa).

Over 1–19 (MARAAGERGRAARCGRWRR) the chain is Cytoplasmic. The short motif at 18–19 (RR) is the May mediate ER retention element. A helical transmembrane segment spans residues 20–40 (GALLAFAAWTAGWVLAAALLL). Residues 41–410 (RAHPSVLSER…TLKELQEAEK (370 aa)) are Lumenal-facing.

It belongs to the DIPK family. Among the many cysteines in the lumenal domain, most are probably involved in disulfide bonds. Mainly expressed in the brain and eye, some expression in kidney and skeletal muscle.

It localises to the endoplasmic reticulum membrane. The sequence is that of Divergent protein kinase domain 1C (Dipk1c) from Mus musculus (Mouse).